Reading from the N-terminus, the 213-residue chain is ATP-dependent Clp protease proteolytic subunit (213 aa).

Ser114 (nucleophile) is an active-site residue. The active site involves His139.

Belongs to the peptidase S14 family. As to quaternary structure, fourteen ClpP subunits assemble into 2 heptameric rings which stack back to back to give a disk-like structure with a central cavity, resembling the structure of eukaryotic proteasomes.

The protein localises to the cytoplasm. It catalyses the reaction Hydrolysis of proteins to small peptides in the presence of ATP and magnesium. alpha-casein is the usual test substrate. In the absence of ATP, only oligopeptides shorter than five residues are hydrolyzed (such as succinyl-Leu-Tyr-|-NHMec, and Leu-Tyr-Leu-|-Tyr-Trp, in which cleavage of the -Tyr-|-Leu- and -Tyr-|-Trp bonds also occurs).. Functionally, cleaves peptides in various proteins in a process that requires ATP hydrolysis. Has a chymotrypsin-like activity. Plays a major role in the degradation of misfolded proteins. The chain is ATP-dependent Clp protease proteolytic subunit from Pseudomonas putida (strain GB-1).